Here is a 427-residue protein sequence, read N- to C-terminus: Glutamate-1-semialdehyde 2,1-aminomutase (427 aa).

The residue at position 265 (Lys-265) is an N6-(pyridoxal phosphate)lysine.

Belongs to the class-III pyridoxal-phosphate-dependent aminotransferase family. HemL subfamily. As to quaternary structure, homodimer. Pyridoxal 5'-phosphate is required as a cofactor.

It localises to the cytoplasm. The catalysed reaction is (S)-4-amino-5-oxopentanoate = 5-aminolevulinate. It participates in porphyrin-containing compound metabolism; protoporphyrin-IX biosynthesis; 5-aminolevulinate from L-glutamyl-tRNA(Glu): step 2/2. In Bordetella bronchiseptica (strain ATCC BAA-588 / NCTC 13252 / RB50) (Alcaligenes bronchisepticus), this protein is Glutamate-1-semialdehyde 2,1-aminomutase.